The primary structure comprises 313 residues: Protein FixB (313 aa).

An FAD-binding site is contributed by 255-283 (LYLAVGISGQIQHMVGANASQTIFAINKD).

It belongs to the ETF alpha-subunit/FixB family. Heterodimer of FixA and FixB.

Its pathway is amine and polyamine metabolism; carnitine metabolism. Functionally, required for anaerobic carnitine reduction. May bring reductant to CaiA. This is Protein FixB from Escherichia coli (strain K12 / MC4100 / BW2952).